Consider the following 33-residue polypeptide: Brevinin-2PTb (33 aa).

Cys27 and Cys33 form a disulfide bridge.

In terms of tissue distribution, expressed by the skin glands.

Its subcellular location is the secreted. Functionally, has antibacterial activity against the Gram-positive bacterium S.aureus ATCC 25923 (MIC=9 uM) and the Gram-negative bacterium E.coli ATCC 25726 (MIC=9 uM). The protein is Brevinin-2PTb of Pulchrana picturata (Malaysian fire frog).